The sequence spans 199 residues: Transgelin-3 (199 aa).

One can recognise a Calponin-homology (CH) domain in the interval 24–136 (ADLENKLVDW…RTLMALGSVA (113 aa)). Position 163 is a phosphoserine (serine 163). A Calponin-like repeat occupies 174-199 (IGLQMGSNKGASQAGMTGYGMPRQIM). The segment covering 178 to 188 (MGSNKGASQAG) has biased composition (polar residues). A disordered region spans residues 178 to 199 (MGSNKGASQAGMTGYGMPRQIM).

Belongs to the calponin family.

The protein is Transgelin-3 (Tagln3) of Mus musculus (Mouse).